The primary structure comprises 471 residues: Regulator of microtubule dynamics protein 3 (471 aa).

Topologically, residues 1–12 (MSRLGALGGSRA) are mitochondrial intermembrane. A helical membrane pass occupies residues 13–35 (GLGLLLGTAAGLGFLCVLYSQRW). Over 36–471 (KRTQRHGRSQ…LEELEVILGK (436 aa)) the chain is Cytoplasmic. Phosphoserine occurs at positions 44, 46, 50, and 57. A coiled-coil region spans residues 91–125 (LDRLDFVLTSLMALRREVEELQRSLQGLAGEIVGE). The FFAT motif lies at 157–163 (VYFTASS). Threonine 160 carries the phosphothreonine modification. The tract at residues 168–203 (TDAESEGGYTTANAESDYERDSDKESEDAEDEVSCE) is disordered. Serine 183, serine 193, serine 212, and serine 233 each carry phosphoserine. Positions 191–201 (KESEDAEDEVS) are enriched in acidic residues.

It belongs to the RMDN family. As to quaternary structure, interacts with PTPN2. Interacts with microtubules. Interacts with VAPB. Interacts (via FFAT motif) with MOSPD2 (via MSP domain). Interacts (via phosphorylated FFAT motif) with MOSPD2, VAPA and VAPB. Post-translationally, phosphorylation at Thr-160 of the FFAT motif activates interaction with MOSPD2, VAPA and VAPB.

The protein resides in the mitochondrion outer membrane. It localises to the cytoplasm. Its subcellular location is the nucleus. It is found in the cytoskeleton. The protein localises to the spindle. The protein resides in the spindle pole. Involved in cellular calcium homeostasis regulation. May participate in differentiation and apoptosis of keratinocytes. Overexpression induces apoptosis. The sequence is that of Regulator of microtubule dynamics protein 3 from Rattus norvegicus (Rat).